The sequence spans 1742 residues: Unconventional myosin-Vc (1742 aa).

Ala-2 carries the N-acetylalanine modification. The region spanning 8–62 (TQYNRVWIPDPEEVWKSAEIAKDYRVGDKVLRLLLEDGTELDYSVNPESLPPLRN) is the Myosin N-terminal SH3-like domain. The Myosin motor domain maps to 67–753 (VGENDLTALS…QVAYLEKLRL (687 aa)). Position 161–168 (161–168 (GESGAGKT)) interacts with ATP. The tract at residues 632 to 654 (LYLLMETLNATTPHYVRCIKPND) is actin-binding. IQ domains lie at 756–779 (LRQSCVMVQKHMRGWLQRKKFLRE), 780–806 (RRAALIIQQYFRGQQTVRKAITAVALK), 807–829 (EAWAAIIIQKHCRGYLVRSLYQL), 830–854 (IRMATITMQAYSRGFLARRRYRKML), and 855–884 (EEHKAVILQKYARAWLARRRFQSIRRFVLN). Residues 884–1351 (NIQLTYRVQR…SKTIGKANDV (468 aa)) adopt a coiled-coil conformation. A Dilute domain is found at 1421-1697 (NSTINGIKQV…VRKVQALLNS (277 aa)).

It belongs to the TRAFAC class myosin-kinesin ATPase superfamily. Myosin family. Expressed chiefly in non-neuronal tissues. Particularly abundant in epithelial and glandular tissues including pancreas, prostate, mammary, stomach, colon and lung.

May be involved in transferrin trafficking. Likely to power actin-based membrane trafficking in many physiologically crucial tissues. This is Unconventional myosin-Vc (MYO5C) from Homo sapiens (Human).